The following is a 317-amino-acid chain: E3 ubiquitin-protein ligase NRDP1 (317 aa).

The RING-type; degenerate zinc-finger motif lies at Cys18–Arg57. Residues Lys78–Leu138 form an SIAH-type; degenerate zinc finger.

Interacts with USP8, ERBB3, PRKN and BIRC6. Interacts with CSF2RB, EPOR, IL3RA, MYD88 and TBK1. Interacts with CLEC16A. Autoubiquitinated. Autoubiquitination leads to proteasomal degradation. Deubiquitinated by USP8 to get stabilized which induces apoptosis. In terms of tissue distribution, detected in ovary, testis and prostate.

The enzyme catalyses S-ubiquitinyl-[E2 ubiquitin-conjugating enzyme]-L-cysteine + [acceptor protein]-L-lysine = [E2 ubiquitin-conjugating enzyme]-L-cysteine + N(6)-ubiquitinyl-[acceptor protein]-L-lysine.. Its pathway is protein modification; protein ubiquitination. Its function is as follows. Acts as E3 ubiquitin-protein ligase and regulates the degradation of target proteins. Polyubiquitinates MYD88. Negatively regulates MYD88-dependent production of pro-inflammatory cytokines. Can promote TRIF-dependent production of type I interferon and inhibits infection with vesicular stomatitis virus. Promotes also activation of TBK1 and IRF3. Involved in the ubiquitination of erythropoietin (EPO) and interleukin-3 (IL-3) receptors. Thus, through maintaining basal levels of cytokine receptors, RNF41 is involved in the control of hematopoietic progenitor cell differentiation into myeloerythroid lineages. Contributes to the maintenance of steady-state ERBB3 levels by mediating its growth factor-independent degradation. Involved in the degradation of the inhibitor of apoptosis BIRC6 and thus is an important regulator of cell death by promoting apoptosis. Also acts as a PRKN modifier that accelerates its degradation, resulting in a reduction of PRKN activity, influencing the balance of intracellular redox state. The RNF41-PRKN pathway regulates autophagosome-lysosome fusion during late mitophagy. Mitophagy is a selective form of autophagy necessary for mitochondrial quality control. The protein is E3 ubiquitin-protein ligase NRDP1 (RNF41) of Homo sapiens (Human).